Here is a 213-residue protein sequence, read N- to C-terminus: Orotidine 5'-phosphate decarboxylase (213 aa).

Residues Asp-9, Lys-31, Asp-59–Thr-68, Ser-115, Pro-166–Glu-176, Gly-191, and Arg-192 each bind substrate. The active-site Proton donor is Lys-61.

It belongs to the OMP decarboxylase family. Type 1 subfamily. In terms of assembly, homodimer.

The catalysed reaction is orotidine 5'-phosphate + H(+) = UMP + CO2. The protein operates within pyrimidine metabolism; UMP biosynthesis via de novo pathway; UMP from orotate: step 2/2. In terms of biological role, catalyzes the decarboxylation of orotidine 5'-monophosphate (OMP) to uridine 5'-monophosphate (UMP). The sequence is that of Orotidine 5'-phosphate decarboxylase from Methanocaldococcus jannaschii (strain ATCC 43067 / DSM 2661 / JAL-1 / JCM 10045 / NBRC 100440) (Methanococcus jannaschii).